A 103-amino-acid chain; its full sequence is Small ribosomal subunit protein uS10 (103 aa).

Belongs to the universal ribosomal protein uS10 family. As to quaternary structure, part of the 30S ribosomal subunit.

Involved in the binding of tRNA to the ribosomes. In Campylobacter hominis (strain ATCC BAA-381 / DSM 21671 / CCUG 45161 / LMG 19568 / NCTC 13146 / CH001A), this protein is Small ribosomal subunit protein uS10.